Reading from the N-terminus, the 226-residue chain is Orotidine 5'-phosphate decarboxylase (226 aa).

Substrate-binding positions include Asp8, Lys30, 58–67 (DLKLYDIPNT), Thr117, Arg177, Gln186, Gly206, and Arg207. The Proton donor role is filled by Lys60.

This sequence belongs to the OMP decarboxylase family. Type 1 subfamily. As to quaternary structure, homodimer.

The catalysed reaction is orotidine 5'-phosphate + H(+) = UMP + CO2. Its pathway is pyrimidine metabolism; UMP biosynthesis via de novo pathway; UMP from orotate: step 2/2. Catalyzes the decarboxylation of orotidine 5'-monophosphate (OMP) to uridine 5'-monophosphate (UMP). The chain is Orotidine 5'-phosphate decarboxylase from Campylobacter concisus (strain 13826).